We begin with the raw amino-acid sequence, 122 residues long: MSITKDQILEAFAEMSVMEVVELIEAMEEKFGVSAAAAVVAGGAEGGAAAAEQTEFDVMMTSFGANKVAVIKALRGATGLGLKEAKAMAESAPVAVKEGLEKAEAEALKAELEAAGAEVEIK.

It belongs to the bacterial ribosomal protein bL12 family. Homodimer. Part of the ribosomal stalk of the 50S ribosomal subunit. Forms a multimeric L10(L12)X complex, where L10 forms an elongated spine to which 2 to 4 L12 dimers bind in a sequential fashion. Binds GTP-bound translation factors.

Its function is as follows. Forms part of the ribosomal stalk which helps the ribosome interact with GTP-bound translation factors. Is thus essential for accurate translation. This Shewanella woodyi (strain ATCC 51908 / MS32) protein is Large ribosomal subunit protein bL12.